The sequence spans 208 residues: MSQGNLYILSAPSGAGKSSLISALLASDSSTQKMVSVSHTTRAPRPGEVEGVHYYFVSKEEFESLIEQDLFLEYAKVFGGNYYGTSLPAIEENLAKGIDVFLDIDWQGAQQIRKKVPSVKSIFILPPSLPELERRLIGRGQDSEEVIAERMSKAISEISHYDEYDYVIVNDDFEKTLKDLQSILQSERLTKDYQQKQNAMLIQQLLAK.

The Guanylate kinase-like domain occupies 4–185 (GNLYILSAPS…TLKDLQSILQ (182 aa)). 11 to 18 (APSGAGKS) provides a ligand contact to ATP.

Belongs to the guanylate kinase family.

It localises to the cytoplasm. The catalysed reaction is GMP + ATP = GDP + ADP. Functionally, essential for recycling GMP and indirectly, cGMP. This is Guanylate kinase from Haemophilus influenzae (strain 86-028NP).